Here is a 463-residue protein sequence, read N- to C-terminus: Fumarate hydratase class II (463 aa).

Substrate is bound by residues 97 to 99 (SGT), R125, 128 to 131 (HPND), 138 to 140 (SSN), and T186. Residues 121–134 (RGEGRKVHPNDHVN) are compositionally biased toward basic and acidic residues. The interval 121–142 (RGEGRKVHPNDHVNRGQSSNDT) is disordered. H187 serves as the catalytic Proton donor/acceptor. S317 is a catalytic residue. Residues S318 and 323-325 (KVN) contribute to the substrate site.

Belongs to the class-II fumarase/aspartase family. Fumarase subfamily. In terms of assembly, homotetramer.

The protein localises to the cytoplasm. The enzyme catalyses (S)-malate = fumarate + H2O. Its pathway is carbohydrate metabolism; tricarboxylic acid cycle; (S)-malate from fumarate: step 1/1. Its function is as follows. Involved in the TCA cycle. Catalyzes the stereospecific interconversion of fumarate to L-malate. This chain is Fumarate hydratase class II, found in Bordetella bronchiseptica (strain ATCC BAA-588 / NCTC 13252 / RB50) (Alcaligenes bronchisepticus).